The chain runs to 277 residues: 4-hydroxy-3-methylbut-2-enyl diphosphate reductase (277 aa).

Cysteine 12 provides a ligand contact to [4Fe-4S] cluster. Positions 36 and 70 each coordinate (2E)-4-hydroxy-3-methylbut-2-enyl diphosphate. Dimethylallyl diphosphate contacts are provided by histidine 36 and histidine 70. Histidine 36 and histidine 70 together coordinate isopentenyl diphosphate. Cysteine 92 is a [4Fe-4S] cluster binding site. (2E)-4-hydroxy-3-methylbut-2-enyl diphosphate is bound at residue histidine 120. Histidine 120 is a dimethylallyl diphosphate binding site. Isopentenyl diphosphate is bound at residue histidine 120. Glutamate 122 functions as the Proton donor in the catalytic mechanism. Threonine 158 lines the (2E)-4-hydroxy-3-methylbut-2-enyl diphosphate pocket. Residue cysteine 186 coordinates [4Fe-4S] cluster. 3 residues coordinate (2E)-4-hydroxy-3-methylbut-2-enyl diphosphate: serine 214, asparagine 216, and serine 258. Residues serine 214, asparagine 216, and serine 258 each coordinate dimethylallyl diphosphate. 3 residues coordinate isopentenyl diphosphate: serine 214, asparagine 216, and serine 258.

It belongs to the IspH family. The cofactor is [4Fe-4S] cluster.

It catalyses the reaction isopentenyl diphosphate + 2 oxidized [2Fe-2S]-[ferredoxin] + H2O = (2E)-4-hydroxy-3-methylbut-2-enyl diphosphate + 2 reduced [2Fe-2S]-[ferredoxin] + 2 H(+). The catalysed reaction is dimethylallyl diphosphate + 2 oxidized [2Fe-2S]-[ferredoxin] + H2O = (2E)-4-hydroxy-3-methylbut-2-enyl diphosphate + 2 reduced [2Fe-2S]-[ferredoxin] + 2 H(+). Its pathway is isoprenoid biosynthesis; dimethylallyl diphosphate biosynthesis; dimethylallyl diphosphate from (2E)-4-hydroxy-3-methylbutenyl diphosphate: step 1/1. It participates in isoprenoid biosynthesis; isopentenyl diphosphate biosynthesis via DXP pathway; isopentenyl diphosphate from 1-deoxy-D-xylulose 5-phosphate: step 6/6. Catalyzes the conversion of 1-hydroxy-2-methyl-2-(E)-butenyl 4-diphosphate (HMBPP) into a mixture of isopentenyl diphosphate (IPP) and dimethylallyl diphosphate (DMAPP). Acts in the terminal step of the DOXP/MEP pathway for isoprenoid precursor biosynthesis. The sequence is that of 4-hydroxy-3-methylbut-2-enyl diphosphate reductase from Campylobacter jejuni subsp. doylei (strain ATCC BAA-1458 / RM4099 / 269.97).